We begin with the raw amino-acid sequence, 372 residues long: 3-ketodihydrosphingosine reductase TSC10 (372 aa).

An NADP(+)-binding site is contributed by Val-64. NADPH is bound by residues Gly-67, Ser-69, Gly-71, Arg-92, Lys-96, Asp-123, and Leu-124. Positions 67–71 (GGSQG) match the GXSXG motif. Asp-123 is an NADP(+) binding site. Residue Ser-205 is the Proton donor of the active site. NADP(+)-binding residues include Tyr-219, Lys-223, and Ser-254. Tyr-219 serves as the catalytic Proton acceptor. Lys-223 serves as the catalytic Lowers pKa of active site Tyr. The helical transmembrane segment at 321–341 (LLQIPLAIFMCIFSPVWNAFV) threads the bilayer.

Belongs to the short-chain dehydrogenases/reductases (SDR) family.

It is found in the endoplasmic reticulum membrane. The catalysed reaction is sphinganine + NADP(+) = 3-oxosphinganine + NADPH + H(+). Its pathway is lipid metabolism; sphingolipid metabolism. Catalyzes the reduction of 3'-oxosphinganine (3-ketodihydrosphingosine/KDS) to sphinganine (dihydrosphingosine/DHS), the second step of de novo sphingolipid biosynthesis. This chain is 3-ketodihydrosphingosine reductase TSC10 (TSC10), found in Yarrowia lipolytica (strain CLIB 122 / E 150) (Yeast).